We begin with the raw amino-acid sequence, 89 residues long: Small ribosomal subunit protein uS15 (89 aa).

The protein belongs to the universal ribosomal protein uS15 family. Part of the 30S ribosomal subunit. Forms a bridge to the 50S subunit in the 70S ribosome, contacting the 23S rRNA.

Functionally, one of the primary rRNA binding proteins, it binds directly to 16S rRNA where it helps nucleate assembly of the platform of the 30S subunit by binding and bridging several RNA helices of the 16S rRNA. Its function is as follows. Forms an intersubunit bridge (bridge B4) with the 23S rRNA of the 50S subunit in the ribosome. The sequence is that of Small ribosomal subunit protein uS15 from Shewanella baltica (strain OS223).